A 403-amino-acid chain; its full sequence is MAKLIISDLDVKGKKVLVRVDFNVPIKDGVIGDDNRIVAALPTIKYIIEHGGKAILLSHLGRVKSDADKKELSLKPVAERLSELLDKPVTFVPSNEGKEVEEAIDNMKDGDVVVLENTRFQDIDNDFGKRESGNDPKLGEYWASLGDIFVNDAFGTAHRSHASNVGIATAMKENGKPAAAGYLLEKEIKYLGDAVDNPVHPFVTILGGAKVSDKIGVIENLIPKSDHILIGGGMAYTFLAAQGHKIGKSLFEADKVDLAKELLEKAGDKIVLPVDNVAATEFSNDASREVVGDDIPDNMMGLDIGPKTIAKFKDILKDAKTVVWNGPMGAFEMPNFAEGTLEVGRALANLTDATTIIGGGDSTAAAKQLGIAPKISHISTGGGASLNYLEGKVLPGIACVSDK.

Substrate contacts are provided by residues 21–23 (DFN), Arg36, 59–62 (HLGR), Arg119, and Arg159. ATP-binding positions include Lys214, Gly301, Glu332, and 359 to 362 (GGDS).

This sequence belongs to the phosphoglycerate kinase family. As to quaternary structure, monomer.

It is found in the cytoplasm. It carries out the reaction (2R)-3-phosphoglycerate + ATP = (2R)-3-phospho-glyceroyl phosphate + ADP. Its pathway is carbohydrate degradation; glycolysis; pyruvate from D-glyceraldehyde 3-phosphate: step 2/5. The protein is Phosphoglycerate kinase of Lactobacillus acidophilus (strain ATCC 700396 / NCK56 / N2 / NCFM).